Reading from the N-terminus, the 328-residue chain is Cytosolic Fe-S cluster assembly factor NBP35 (328 aa).

Positions 27, 41, 44, and 50 each coordinate [4Fe-4S] cluster. 80-87 (GKGGVGKS) lines the ATP pocket. Positions 253 and 256 each coordinate [4Fe-4S] cluster.

This sequence belongs to the Mrp/NBP35 ATP-binding proteins family. NUBP1/NBP35 subfamily. As to quaternary structure, heterotetramer of 2 NBP35 and 2 CFD1 chains. Requires [4Fe-4S] cluster as cofactor.

Its subcellular location is the cytoplasm. It is found in the nucleus. Its function is as follows. Component of the cytosolic iron-sulfur (Fe/S) protein assembly (CIA) machinery. Required for maturation of extramitochondrial Fe-S proteins. The NBP35-CFD1 heterotetramer forms a Fe-S scaffold complex, mediating the de novo assembly of an Fe-S cluster and its transfer to target apoproteins. Required for biogenesis and export of both ribosomal subunits, which may reflect a role in assembly of the Fe/S clusters in RLI1, a protein which performs rRNA processing and ribosome export. The sequence is that of Cytosolic Fe-S cluster assembly factor NBP35 from Saccharomyces cerevisiae (strain ATCC 204508 / S288c) (Baker's yeast).